Reading from the N-terminus, the 253-residue chain is Imidazole glycerol phosphate synthase subunit HisF (253 aa).

Catalysis depends on residues Asp-11 and Asp-130.

Belongs to the HisA/HisF family. In terms of assembly, heterodimer of HisH and HisF.

It localises to the cytoplasm. The enzyme catalyses 5-[(5-phospho-1-deoxy-D-ribulos-1-ylimino)methylamino]-1-(5-phospho-beta-D-ribosyl)imidazole-4-carboxamide + L-glutamine = D-erythro-1-(imidazol-4-yl)glycerol 3-phosphate + 5-amino-1-(5-phospho-beta-D-ribosyl)imidazole-4-carboxamide + L-glutamate + H(+). It participates in amino-acid biosynthesis; L-histidine biosynthesis; L-histidine from 5-phospho-alpha-D-ribose 1-diphosphate: step 5/9. Functionally, IGPS catalyzes the conversion of PRFAR and glutamine to IGP, AICAR and glutamate. The HisF subunit catalyzes the cyclization activity that produces IGP and AICAR from PRFAR using the ammonia provided by the HisH subunit. The sequence is that of Imidazole glycerol phosphate synthase subunit HisF from Desulfitobacterium hafniense (strain DSM 10664 / DCB-2).